The sequence spans 362 residues: 3-isopropylmalate dehydrogenase (362 aa).

77-88 (GPKWGTGAVRPE) is a binding site for NAD(+). Positions 95, 105, 134, and 223 each coordinate substrate. The Mg(2+) site is built by aspartate 223, aspartate 248, and aspartate 252. An NAD(+)-binding site is contributed by 287–298 (GSAPDLPANKVN).

The protein belongs to the isocitrate and isopropylmalate dehydrogenases family. Homodimer. Mg(2+) is required as a cofactor. The cofactor is Mn(2+).

It is found in the cytoplasm. It catalyses the reaction (2R,3S)-3-isopropylmalate + NAD(+) = 4-methyl-2-oxopentanoate + CO2 + NADH. The protein operates within amino-acid biosynthesis; L-leucine biosynthesis; L-leucine from 3-methyl-2-oxobutanoate: step 3/4. In terms of biological role, catalyzes the oxidation of 3-carboxy-2-hydroxy-4-methylpentanoate (3-isopropylmalate) to 3-carboxy-4-methyl-2-oxopentanoate. The product decarboxylates to 4-methyl-2 oxopentanoate. The polypeptide is 3-isopropylmalate dehydrogenase (LEU2) (Kluyveromyces lactis (strain ATCC 8585 / CBS 2359 / DSM 70799 / NBRC 1267 / NRRL Y-1140 / WM37) (Yeast)).